We begin with the raw amino-acid sequence, 596 residues long: Nuclear receptor subfamily 2 group C member 2 (596 aa).

Serine 19 is modified (phosphoserine; by MAPK). Serine 46 is subject to Phosphoserine. Phosphoserine; by MAPK is present on residues serine 55 and serine 68. Position 98 is a phosphoserine (serine 98). The nuclear receptor DNA-binding region spans 114 to 189 (VEYCVVCGDK…MGMKMESVQS (76 aa)). NR C4-type zinc fingers lie at residues 117–137 (CVVCGDKASGRHYGAVSCEGC) and 153–177 (CRSNQDCIINKHHRNRCQFCRLKKC). Lysine 192 is covalently cross-linked (Glycyl lysine isopeptide (Lys-Gly) (interchain with G-Cter in SUMO2)). Serine 219 carries the post-translational modification Phosphoserine. Lysine 231 is subject to N6-acetyllysine. The NR LBD domain occupies 341-583 (GSIHVISRDQ…SIIPYILKME (243 aa)).

It belongs to the nuclear hormone receptor family. NR2 subfamily. In terms of assembly, homodimer; can bind DNA as homodimer. Heterodimer; binds DNA as a heterodimer with NR2C1 required for chromatin remodeling and for binding to promoter regions such as globin DR1 repeats. Interacts with PCAF; the interaction preferentially occurs on the non-phosphorylated form and induces NR2C2-mediated transactivation activity and does not require the ligand-binding domain. Interacts (MAPK-mediated phosphorylated form) with NRIP1; the interaction promotes repression of NR2C2-mediated activity. Interacts with NR2C2AP; the interaction represses selective NR2C2-mediated transcriptional activity. Interacts with NLRP10. Interacts (via ligand-binding region) with transcriptional corepressor JAZF1; the interaction promotes NR2C2-mediated transcriptional repression. In terms of processing, phosphorylation on Ser-19 and Ser-68 is an important regulator of NR2C2-mediated transcriptional activity. Phosphorylation on these residues recruits the corepressor, NRIP1, leading to transcripional repression, whereas the non-phosphorylated form preferentially recruits the coactivator, PCAF.

The protein resides in the nucleus. In terms of biological role, orphan nuclear receptor that can act as a repressor or activator of transcription. An important repressor of nuclear receptor signaling pathways such as retinoic acid receptor, retinoid X, vitamin D3 receptor, thyroid hormone receptor and estrogen receptor pathways. May regulate gene expression during the late phase of spermatogenesis. Together with NR2C1, forms the core of the DRED (direct repeat erythroid-definitive) complex that represses embryonic and fetal globin transcription including that of GATA1. Binds to hormone response elements (HREs) consisting of two 5'-AGGTCA-3' half site direct repeat consensus sequences. Plays a fundamental role in early embryonic development and embryonic stem cells. Required for normal spermatogenesis and cerebellum development. Appears to be important for neurodevelopmentally regulated behavior. Activates transcriptional activity of LHCG. Antagonist of PPARA-mediated transactivation. In Homo sapiens (Human), this protein is Nuclear receptor subfamily 2 group C member 2 (NR2C2).